A 114-amino-acid chain; its full sequence is Gonadotropin subunit beta-1 (114 aa).

The first 19 residues, 1–19, serve as a signal peptide directing secretion; the sequence is MQLVLMAAVLALAEVGCFG. Intrachain disulfides connect C20/C66, C32/C80, C37/C114, C43/C92, C47/C94, and C97/C104. N24 is a glycosylation site (N-linked (GlcNAc...) asparagine).

The protein belongs to the glycoprotein hormones subunit beta family. As to quaternary structure, heterodimer of an alpha and a beta chain.

The protein resides in the secreted. In terms of biological role, involved in gametogenesis and steroidogenesis. The protein is Gonadotropin subunit beta-1 (cgba) of Fundulus heteroclitus (Killifish).